A 325-amino-acid chain; its full sequence is Biotin synthase (325 aa).

One can recognise a Radical SAM core domain in the interval 42-270; the sequence is YKVQLASLLS…QSRVRLSAGR (229 aa). [4Fe-4S] cluster contacts are provided by Cys57, Cys61, and Cys64. The [2Fe-2S] cluster site is built by Cys101, Cys133, Cys193, and Arg265.

This sequence belongs to the radical SAM superfamily. Biotin synthase family. As to quaternary structure, homodimer. The cofactor is [4Fe-4S] cluster. [2Fe-2S] cluster is required as a cofactor.

It carries out the reaction (4R,5S)-dethiobiotin + (sulfur carrier)-SH + 2 reduced [2Fe-2S]-[ferredoxin] + 2 S-adenosyl-L-methionine = (sulfur carrier)-H + biotin + 2 5'-deoxyadenosine + 2 L-methionine + 2 oxidized [2Fe-2S]-[ferredoxin]. Its pathway is cofactor biosynthesis; biotin biosynthesis; biotin from 7,8-diaminononanoate: step 2/2. Its function is as follows. Catalyzes the conversion of dethiobiotin (DTB) to biotin by the insertion of a sulfur atom into dethiobiotin via a radical-based mechanism. The protein is Biotin synthase of Synechococcus sp. (strain WH7803).